The sequence spans 321 residues: Collectin-43 (321 aa).

Positions 1-20 are cleaved as a signal peptide; sequence MLPLPLSILLLLTQSQSFLG. A disordered region spans residues 43–163; the sequence is PADSLRGHDG…GEKGARGETS (121 aa). Positions 47 to 65 are enriched in basic and acidic residues; that stretch reads LRGHDGRDGKEGPQGEKGD. The Collagen-like domain occupies 49-162; the sequence is GHDGRDGKEG…PGEKGARGET (114 aa). 2 stretches are compositionally biased toward gly residues: residues 100–109 and 124–133; these read GPEGGVGAPG and GTPGPGGAIG. Residues 147–159 are compositionally biased toward basic and acidic residues; the sequence is KGDRGDPGEKGAR. Residues 222–321 enclose the C-type lectin domain; it reads QLCREAKGQL…REERLVICEF (100 aa). 2 cysteine pairs are disulfide-bonded: Cys224–Cys319 and Cys297–Cys311.

Belongs to the SFTPD family. As to quaternary structure, oligomeric complex of 4 set of homotrimers. Post-translationally, hydroxylated. As to expression, liver specific.

Its subcellular location is the secreted. Its function is as follows. Lectin that binds to various sugars: mannose = ManNAc &gt; fucose &gt; GlcNAc &gt; glucose = maltose &gt; galactose &gt; lactose &gt; GalNAc. Could play a role in immune defense. The polypeptide is Collectin-43 (CL43) (Bos taurus (Bovine)).